Consider the following 208-residue polypeptide: Putative 3-methyladenine DNA glycosylase (208 aa).

Belongs to the DNA glycosylase MPG family.

The chain is Putative 3-methyladenine DNA glycosylase from Lactobacillus johnsonii (strain CNCM I-12250 / La1 / NCC 533).